The chain runs to 396 residues: MSEYSLFTSESVSEGHPDKIADQISDAVLDAIIAEDKYARVACETLVKTGVAIIAGEVSTSAWVDLEDIVRNVILDIGYNSSDVGFDGATCGVMNIIGKQSVDIAQGVDRSKPEDQGAGDQGLMFGYASNETDVLMPAPITFSHQLVQRQAEARKSGLLPWLRPDAKSQVTCRYENGKVVGVDAIVLSTQHNPDVSYKDLREGVMELIVKHVIPAHLLHKDTQFHINPTGNFIIGGPVGDCGLTGRKIIVDTYGGMARHGGGAFSGKDPSKVDRSAAYAGRYVAKNIVAAGLAERCEIQVSYAIGVAQPTSISLNTFGTGKLSDDKIIKLVRDNFDLRPYAITTMLDLLHPMYQATAAYGHFGRIPVEMTVGDDTFTAFTWEKTDRADALRAAAGL.

His16 contributes to the ATP binding site. Asp18 lines the Mg(2+) pocket. Residue Glu44 participates in K(+) binding. Glu57 and Gln100 together coordinate L-methionine. The tract at residues 100 to 110 (QSVDIAQGVDR) is flexible loop. ATP contacts are provided by residues 165 to 167 (DAK), Asp240, 246 to 247 (RK), Ala263, and Lys267. Residue Asp240 participates in L-methionine binding. An L-methionine-binding site is contributed by Lys271.

Belongs to the AdoMet synthase family. As to quaternary structure, homotetramer; dimer of dimers. Mg(2+) is required as a cofactor. K(+) serves as cofactor.

It localises to the cytoplasm. It catalyses the reaction L-methionine + ATP + H2O = S-adenosyl-L-methionine + phosphate + diphosphate. It functions in the pathway amino-acid biosynthesis; S-adenosyl-L-methionine biosynthesis; S-adenosyl-L-methionine from L-methionine: step 1/1. Its function is as follows. Catalyzes the formation of S-adenosylmethionine (AdoMet) from methionine and ATP. The overall synthetic reaction is composed of two sequential steps, AdoMet formation and the subsequent tripolyphosphate hydrolysis which occurs prior to release of AdoMet from the enzyme. This Pseudomonas syringae pv. syringae (strain B728a) protein is S-adenosylmethionine synthase.